We begin with the raw amino-acid sequence, 154 residues long: Myoglobin (154 aa).

A Globin domain is found at 2 to 148; it reads GLSDGEWQLV…FRNDIAAKYK (147 aa). Ser-4 bears the Phosphoserine mark. Nitrite is bound at residue His-65. Position 65 (His-65) interacts with O2. Residue Thr-68 is modified to Phosphothreonine. A heme b-binding site is contributed by His-94.

Belongs to the globin family. Monomeric.

The protein resides in the cytoplasm. Its subcellular location is the sarcoplasm. It catalyses the reaction Fe(III)-heme b-[protein] + nitric oxide + H2O = Fe(II)-heme b-[protein] + nitrite + 2 H(+). The enzyme catalyses H2O2 + AH2 = A + 2 H2O. In terms of biological role, monomeric heme protein which primary function is to store oxygen and facilitate its diffusion within muscle tissues. Reversibly binds oxygen through a pentacoordinated heme iron and enables its timely and efficient release as needed during periods of heightened demand. Depending on the oxidative conditions of tissues and cells, and in addition to its ability to bind oxygen, it also has a nitrite reductase activity whereby it regulates the production of bioactive nitric oxide. Under stress conditions, like hypoxia and anoxia, it also protects cells against reactive oxygen species thanks to its pseudoperoxidase activity. The chain is Myoglobin (MB) from Proechimys guairae (Guaira spiny rat).